The sequence spans 333 residues: Adenosine deaminase (333 aa).

2 residues coordinate Zn(2+): His-12 and His-14. Positions 14, 16, and 170 each coordinate substrate. Zn(2+) is bound at residue His-197. Glu-200 acts as the Proton donor in catalysis. Asp-278 is a Zn(2+) binding site. Asp-279 is a binding site for substrate.

The protein belongs to the metallo-dependent hydrolases superfamily. Adenosine and AMP deaminases family. Adenosine deaminase subfamily. Requires Zn(2+) as cofactor.

The enzyme catalyses adenosine + H2O + H(+) = inosine + NH4(+). It carries out the reaction 2'-deoxyadenosine + H2O + H(+) = 2'-deoxyinosine + NH4(+). In terms of biological role, catalyzes the hydrolytic deamination of adenosine and 2-deoxyadenosine. The sequence is that of Adenosine deaminase from Photorhabdus laumondii subsp. laumondii (strain DSM 15139 / CIP 105565 / TT01) (Photorhabdus luminescens subsp. laumondii).